Here is a 173-residue protein sequence, read N- to C-terminus: Photosystem I assembly protein Ycf3 (173 aa).

TPR repeat units follow at residues 35 to 68 (AYIYYRDGLAAQNNGDYSEALEYYKESLLLEENK), 72 to 105 (GETLKNMAIIYMSNGEEDLSIETYEKALVENPKQ), and 120 to 153 (GRNAEQNGDLDQRDIWFDKAAEVWSKAVRLYPGG).

It belongs to the Ycf3 family.

The protein resides in the cellular thylakoid membrane. Functionally, essential for the assembly of the photosystem I (PSI) complex. May act as a chaperone-like factor to guide the assembly of the PSI subunits. The protein is Photosystem I assembly protein Ycf3 of Prochlorococcus marinus (strain MIT 9301).